A 371-amino-acid chain; its full sequence is Cytochrome b (371 aa).

Transmembrane regions (helical) follow at residues F25–V45, W69–I90, W105–L125, and F170–I190. H75 and H89 together coordinate heme b. Positions 174 and 188 each coordinate heme b. H193 contributes to the a ubiquinone binding site. 4 helical membrane-spanning segments follow: residues Y218–F238, L280–H300, L312–T332, and Y339–P358.

The protein belongs to the cytochrome b family. The cytochrome bc1 complex contains 3 respiratory subunits (MT-CYB, CYC1 and UQCRFS1), 2 core proteins (UQCRC1 and UQCRC2) and probably 6 low-molecular weight proteins. Requires heme b as cofactor.

The protein localises to the mitochondrion inner membrane. In terms of biological role, component of the ubiquinol-cytochrome c reductase complex (complex III or cytochrome b-c1 complex) that is part of the mitochondrial respiratory chain. The b-c1 complex mediates electron transfer from ubiquinol to cytochrome c. Contributes to the generation of a proton gradient across the mitochondrial membrane that is then used for ATP synthesis. The chain is Cytochrome b (MT-CYB) from Simalia amethistina (Amethystine python).